We begin with the raw amino-acid sequence, 91 residues long: Ice-structuring protein 2A7 (91 aa).

Residues 1-21 (MALSLFTVGQLIFLFWTMRIT) form the signal peptide. Positions 22–39 (EANPDPAAKAVPAAAAPD) are cleaved as a propeptide — removed by a dipeptidylpeptidase.

The protein belongs to the type-I AFP family. As to expression, detected in blood serum (at protein level).

It is found in the secreted. Functionally, contributes to protect fish blood from freezing at subzero sea water temperatures. Lowers the blood freezing point. Binds to nascent ice crystals and prevents further growth. The chain is Ice-structuring protein 2A7 from Pseudopleuronectes americanus (Winter flounder).